The sequence spans 599 residues: RING finger protein unkempt (599 aa).

5 C3H1-type zinc fingers span residues 71–100, 111–141, 194–220, 230–264, and 272–300; these read YSAD…HRTA, YYKT…HGMQ, NYKT…HNSK, KYRS…HTRT, and IYKS…HVEP. Phosphoserine is present on Ser411. Residues 556 to 591 form an RING-type zinc finger; it reads CMKCEENNRTVTLEPCNHLSICNTCAESVTECPYCQ.

The protein belongs to the unkempt family. In terms of tissue distribution, ubiquitous in most somatic tissues from syncytial embryo through to embryo stage 15. Expression becomes restricted predominantly to the CNS at stages 16 and 17.

Its subcellular location is the cytoplasm. Essential for late larval/early pupal development. The protein is RING finger protein unkempt (unk) of Drosophila melanogaster (Fruit fly).